The sequence spans 132 residues: Mercuric resistance operon regulatory protein (132 aa).

An HTH merR-type domain is found at 2-71 (KFRIGELADK…LNEIDKLLGV (70 aa)). Residues 5 to 24 (IGELADKCGVNKETIRYYER) constitute a DNA-binding region (H-T-H motif). Cys79, Cys114, and Cys123 together coordinate Hg(2+).

Homodimer.

Mediates the mercuric-dependent induction of mercury resistance operon. In the absence of mercury MerR represses transcription by binding tightly to the mer operator region; when mercury is present the dimeric complex binds a single ion and becomes a potent transcriptional activator, while remaining bound to the mer site. In Bacillus cereus, this protein is Mercuric resistance operon regulatory protein (merR1).